Here is a 775-residue protein sequence, read N- to C-terminus: Minichromosome maintenance protein 5 (775 aa).

Positions 1 to 22 are disordered; the sequence is MSFDRPEIYSAPVLQGESPNDD. Residues 366–573 enclose the MCM domain; sequence LYEILTNSIA…RDISIANHVI (208 aa). 416 to 423 is a binding site for ATP; that stretch reads GDPGTAKS. The Arginine finger signature appears at 548-551; the sequence is SRFD.

Belongs to the MCM family. In terms of assembly, component of the MCM2-7 complex. The complex forms a toroidal hexameric ring with the proposed subunit order MCM2-MCM6-MCM4-MCM7-MCM3-MCM5; loaded onto DNA, forms a head-head double hexamer. Interacts with CSM1.

It localises to the nucleus. It carries out the reaction ATP + H2O = ADP + phosphate + H(+). In terms of biological role, acts as a component of the MCM2-7 complex (MCM complex) which is the putative replicative helicase essential for 'once per cell cycle' DNA replication initiation and elongation in eukaryotic cells. The active ATPase sites in the MCM2-7 ring are formed through the interaction surfaces of two neighboring subunits such that a critical structure of a conserved arginine finger motif is provided in trans relative to the ATP-binding site of the Walker A box of the adjacent subunit. The six ATPase active sites, however, are likely to contribute differentially to the complex helicase activity; specifically the MCM2-MCM5 association is proposed to be reversible and to mediate a open ring conformation which may facilitate DNA loading. Once loaded onto DNA, double hexamers can slide on dsDNA in the absence of ATPase activity. The chain is Minichromosome maintenance protein 5 (MCM5) from Saccharomyces cerevisiae (strain ATCC 204508 / S288c) (Baker's yeast).